The sequence spans 332 residues: Ketol-acid reductoisomerase (NADP(+)) (332 aa).

Residues 1–182 (MATIYYEKDA…GCTRAGVLAT (182 aa)) form the KARI N-terminal Rossmann domain. NADP(+) is bound by residues 25–28 (YGSQ), arginine 48, serine 53, and 83–86 (DELQ). Histidine 108 is an active-site residue. Glycine 134 contacts NADP(+). The region spanning 183-328 (TFKEETETDL…KELRSMMPWL (146 aa)) is the KARI C-terminal knotted domain. Mg(2+)-binding residues include aspartate 191, glutamate 195, glutamate 227, and glutamate 231. Serine 252 provides a ligand contact to substrate.

Belongs to the ketol-acid reductoisomerase family. Requires Mg(2+) as cofactor.

It catalyses the reaction (2R)-2,3-dihydroxy-3-methylbutanoate + NADP(+) = (2S)-2-acetolactate + NADPH + H(+). The catalysed reaction is (2R,3R)-2,3-dihydroxy-3-methylpentanoate + NADP(+) = (S)-2-ethyl-2-hydroxy-3-oxobutanoate + NADPH + H(+). It functions in the pathway amino-acid biosynthesis; L-isoleucine biosynthesis; L-isoleucine from 2-oxobutanoate: step 2/4. The protein operates within amino-acid biosynthesis; L-valine biosynthesis; L-valine from pyruvate: step 2/4. Its function is as follows. Involved in the biosynthesis of branched-chain amino acids (BCAA). Catalyzes an alkyl-migration followed by a ketol-acid reduction of (S)-2-acetolactate (S2AL) to yield (R)-2,3-dihydroxy-isovalerate. In the isomerase reaction, S2AL is rearranged via a Mg-dependent methyl migration to produce 3-hydroxy-3-methyl-2-ketobutyrate (HMKB). In the reductase reaction, this 2-ketoacid undergoes a metal-dependent reduction by NADPH to yield (R)-2,3-dihydroxy-isovalerate. In Methanocella arvoryzae (strain DSM 22066 / NBRC 105507 / MRE50), this protein is Ketol-acid reductoisomerase (NADP(+)).